The primary structure comprises 380 residues: Cytochrome b (380 aa).

The next 4 helical transmembrane spans lie at 34 to 54, 78 to 99, 114 to 134, and 179 to 199; these read FGSL…LLAM, WLIR…YLHI, WNTG…GYVL, and FFAL…IHLT. Heme b is bound by residues His-84 and His-98. His-183 and His-197 together coordinate heme b. His-202 is an a ubiquinone binding site. Transmembrane regions (helical) follow at residues 227–247, 289–309, 321–341, and 348–368; these read TKDL…ALFS, LGGV…PFLH, LSQI…WVGS, and FIII…ILFP.

Belongs to the cytochrome b family. In terms of assembly, the cytochrome bc1 complex contains 11 subunits: 3 respiratory subunits (MT-CYB, CYC1 and UQCRFS1), 2 core proteins (UQCRC1 and UQCRC2) and 6 low-molecular weight proteins (UQCRH/QCR6, UQCRB/QCR7, UQCRQ/QCR8, UQCR10/QCR9, UQCR11/QCR10 and a cleavage product of UQCRFS1). This cytochrome bc1 complex then forms a dimer. Heme b is required as a cofactor.

It localises to the mitochondrion inner membrane. Component of the ubiquinol-cytochrome c reductase complex (complex III or cytochrome b-c1 complex) that is part of the mitochondrial respiratory chain. The b-c1 complex mediates electron transfer from ubiquinol to cytochrome c. Contributes to the generation of a proton gradient across the mitochondrial membrane that is then used for ATP synthesis. This Aerodramus vulcanorum (Volcano swiftlet) protein is Cytochrome b (MT-CYB).